Here is a 131-residue protein sequence, read N- to C-terminus: Small ribosomal subunit protein bS6 (131 aa).

Residues 96–131 (VTEASPMAKAKDERDSRRGPAGDRSYDEANAEEIAE) form a disordered region. The span at 104–122 (KAKDERDSRRGPAGDRSYD) shows a compositional bias: basic and acidic residues.

It belongs to the bacterial ribosomal protein bS6 family.

Functionally, binds together with bS18 to 16S ribosomal RNA. The protein is Small ribosomal subunit protein bS6 of Shewanella sp. (strain MR-4).